The sequence spans 250 residues: MSDASSTILFEYPLNEKTRTWLRIESLLQQLHQNHSLTDMGSALTFFRAIAELLDVLERGDVRTELLKELERQQQKLLQWSDVPGVDMERIHTLRRQLKDLASTLMAAPRMGQFLREDRLIGMVRQRLGIPGGCCSFDLPTLHSWLHQPQELREKLVSGWLSSLSPLKQALDMILELIRHSGIFRPQISLNGFFQDNASDADLLRLRLEQAHQLYPQISGHKTRYAIRFLPLDSENGHIPPRLTFELACC.

It belongs to the ZapD family. In terms of assembly, interacts with FtsZ.

Its subcellular location is the cytoplasm. Its function is as follows. Cell division factor that enhances FtsZ-ring assembly. Directly interacts with FtsZ and promotes bundling of FtsZ protofilaments, with a reduction in FtsZ GTPase activity. In Pectobacterium carotovorum subsp. carotovorum (strain PC1), this protein is Cell division protein ZapD.